The sequence spans 151 residues: Large ribosomal subunit protein uL15 (151 aa).

The segment at 1-58 (MTSISLDSLKPNKGARKRKTRKGRGIAAGQGASCGFGMRGQKSRSGRPTRPGFEGGQM) is disordered. Residues 13–24 (KGARKRKTRKGR) are compositionally biased toward basic residues. The segment covering 26 to 38 (IAAGQGASCGFGM) has biased composition (gly residues).

The protein belongs to the universal ribosomal protein uL15 family. Part of the 50S ribosomal subunit.

Functionally, binds to the 23S rRNA. The polypeptide is Large ribosomal subunit protein uL15 (Prochlorococcus marinus (strain SARG / CCMP1375 / SS120)).